Here is a 937-residue protein sequence, read N- to C-terminus: FNIP repeat-containing protein DDB_G0271996 (937 aa).

The segment covering 1–12 has biased composition (polar residues); that stretch reads MQQPISIQQPVV. A disordered region spans residues 1-60; the sequence is MQQPISIQQPVVNNINNSPNNQANINNNTTNNTNNNNNNNNTTNNIANNNNSNNINNNNE. Residues 13–60 show a composition bias toward low complexity; that stretch reads NNINNSPNNQANINNNTTNNTNNNNNNNNTTNNIANNNNSNNINNNNE. FNIP repeat units lie at residues 307–350, 354–394, 396–439, and 598–640; these read FNQP…LGQR, PIPI…TLDN, FNQP…FHQN, and YNHQ…RVKS. Residues 677–769 are a coiled coil; that stretch reads VEQQAQYAQQ…EEEDTNNHQH (93 aa). Low complexity predominate over residues 719-729; that stretch reads KQQQQQQQDNE. 3 disordered regions span residues 719-767, 794-823, and 910-937; these read KQQQ…TNNH, SNNS…EEED, and QNQN…NVKK. The span at 751-763 shows a compositional bias: acidic residues; the sequence is LEEEQENEEEEED. Composition is skewed to low complexity over residues 794 to 814 and 910 to 929; these read SNNS…NNNS and QNQN…NNNN. Positions 902–937 form a coiled coil; that stretch reads ICNNINQNQNQNNNNYNNNNNNNNNNNNNKKKNVKK.

The chain is FNIP repeat-containing protein DDB_G0271996 from Dictyostelium discoideum (Social amoeba).